The primary structure comprises 968 residues: RNA polymerase-associated protein RapA (968 aa).

A Helicase ATP-binding domain is found at 164–334; sequence DVGRRHAPRV…FARLRLLDPS (171 aa). 177-184 serves as a coordination point for ATP; it reads DEVGLGKT. Positions 280-283 match the DEAH box motif; it reads DEAH. A Helicase C-terminal domain is found at 490–644; that stretch reads RVEWLMGHLT…TCPTGRAIYD (155 aa).

It belongs to the SNF2/RAD54 helicase family. RapA subfamily. As to quaternary structure, interacts with the RNAP. Has a higher affinity for the core RNAP than for the holoenzyme. Its ATPase activity is stimulated by binding to RNAP.

Its function is as follows. Transcription regulator that activates transcription by stimulating RNA polymerase (RNAP) recycling in case of stress conditions such as supercoiled DNA or high salt concentrations. Probably acts by releasing the RNAP, when it is trapped or immobilized on tightly supercoiled DNA. Does not activate transcription on linear DNA. Probably not involved in DNA repair. The chain is RNA polymerase-associated protein RapA from Citrobacter koseri (strain ATCC BAA-895 / CDC 4225-83 / SGSC4696).